The sequence spans 241 residues: Major prion protein (241 aa).

The signal sequence occupies residues 1 to 15; it reads MLVLFVATWSDLGLC. The tract at residues 16 to 31 is interaction with ADGRG6; it reads KKRPKPGGWNTGGSRY. Residues 16 to 223 are interaction with GRB2, ERI3 and SYN1; it reads KKRPKPGGWN…ESQAYYQRGS (208 aa). Residues 18 to 101 form a disordered region; sequence RPKPGGWNTG…WHKPNKPKTS (84 aa). 5 consecutive repeat copies span residues 44 to 52, 53 to 60, 61 to 68, 69 to 76, and 77 to 84. Positions 44–84 are 5 X 8 AA tandem repeats of P-H-G-G-G-W-G-Q; that stretch reads PQGGGGWGQPHGGGWGQPHGGGWGQPHGGGWGQPHGGGWGQ. The span at 45–88 shows a compositional bias: gly residues; that stretch reads QGGGGWGQPHGGGWGQPHGGGWGQPHGGGWGQPHGGGWGQGGGT. Residues histidine 54, glycine 55, glycine 56, histidine 62, glycine 63, glycine 64, histidine 70, glycine 71, glycine 72, histidine 78, glycine 79, and glycine 80 each contribute to the Cu(2+) site. Residues 91 to 101 show a composition bias toward basic residues; it reads QWHKPNKPKTS. Cysteine 172 and cysteine 207 form a disulfide bridge. Asparagine 174 and asparagine 190 each carry an N-linked (GlcNAc...) asparagine glycan. Serine 223 carries GPI-anchor amidated serine lipidation. Residues 224-241 constitute a propeptide, removed in mature form; the sequence is SMVLFSSPPVILLISFLI.

Belongs to the prion family. In terms of assembly, monomer and homodimer. Has a tendency to aggregate into amyloid fibrils containing a cross-beta spine, formed by a steric zipper of superposed beta-strands. Soluble oligomers may represent an intermediate stage on the path to fibril formation. Copper binding may promote oligomerization. Interacts with GRB2, APP, ERI3/PRNPIP and SYN1. Mislocalized cytosolically exposed PrP interacts with MGRN1; this interaction alters MGRN1 subcellular location and causes lysosomal enlargement. Interacts with APP. Interacts with KIAA1191. Interacts with ADGRG6.

The protein resides in the cell membrane. Its subcellular location is the golgi apparatus. Its primary physiological function is unclear. May play a role in neuronal development and synaptic plasticity. May be required for neuronal myelin sheath maintenance. May promote myelin homeostasis through acting as an agonist for ADGRG6 receptor. May play a role in iron uptake and iron homeostasis. Soluble oligomers are toxic to cultured neuroblastoma cells and induce apoptosis (in vitro). Association with GPC1 (via its heparan sulfate chains) targets PRNP to lipid rafts. Also provides Cu(2+) or Zn(2+) for the ascorbate-mediated GPC1 deaminase degradation of its heparan sulfate side chains. The polypeptide is Major prion protein (PRNP) (Mandrillus sphinx (Mandrill)).